The chain runs to 115 residues: Somatostatin-2 (115 aa).

Residues 1 to 18 (MKVCRIHCALALLGLALA) form the signal peptide. The propeptide occupies 19 to 87 (ICSQGAASQP…KEDLRVELER (69 aa)). Residues Cys-104 and Cys-115 are joined by a disulfide bond.

This sequence belongs to the somatostatin family.

The protein localises to the secreted. Functionally, somatostatin inhibits the release of somatotropin. The chain is Somatostatin-2 (sst2) from Oncorhynchus mykiss (Rainbow trout).